A 188-amino-acid chain; its full sequence is uncharacterized protein (188 aa).

3 helical membrane passes run 6–26, 43–63, and 110–130; these read MIVFMLLMVEIVSFVILSLPL, FAGRVKHVLKITIICILILFA, and ALFLSLVVNRYYLALEAMIAA.

It is found in the membrane. This is an uncharacterized protein from Schizosaccharomyces pombe (strain 972 / ATCC 24843) (Fission yeast).